Reading from the N-terminus, the 314-residue chain is Vacuolar membrane protein SCRG_03194 (314 aa).

The interval 32–60 (KPTSSVVSETSSKSLPSLTSSAFSTSSGA) is disordered. Residues 93 to 113 (VYIAVGAVIGAIFISILIWWL) traverse the membrane as a helical segment. Phosphoserine is present on residues S148, S254, and S274. Positions 240–309 (EERKLNLNRP…PSMFLDDVLN (70 aa)) are disordered. The segment covering 254-269 (SPERKEKKINSMEGYH) has biased composition (basic and acidic residues).

The protein belongs to the PRM5 family.

It localises to the vacuole membrane. The polypeptide is Vacuolar membrane protein SCRG_03194 (Saccharomyces cerevisiae (strain RM11-1a) (Baker's yeast)).